The primary structure comprises 132 residues: ATP synthase epsilon chain (132 aa).

It belongs to the ATPase epsilon chain family. As to quaternary structure, F-type ATPases have 2 components, CF(1) - the catalytic core - and CF(0) - the membrane proton channel. CF(1) has five subunits: alpha(3), beta(3), gamma(1), delta(1), epsilon(1). CF(0) has three main subunits: a, b and c.

It is found in the cell inner membrane. Its function is as follows. Produces ATP from ADP in the presence of a proton gradient across the membrane. This chain is ATP synthase epsilon chain, found in Jannaschia sp. (strain CCS1).